We begin with the raw amino-acid sequence, 166 residues long: MIYIDNRQNKIKVNEELENKIKEIIDYALKEEKVNIDYEISVVFIDNNSIKEINKDYRNIDKATDVLSFPMLDYEEGEVFKDIYLNYEFDESDLDEGNLVLGDIALSLEKAEEQSKEFGHSFLRETCYLTIHSVLHLLGYDHMEEDEKVIMRQREEEILKSFNLHR.

Residues H132, H136, and H142 each contribute to the Zn(2+) site.

This sequence belongs to the endoribonuclease YbeY family. Zn(2+) is required as a cofactor.

It is found in the cytoplasm. In terms of biological role, single strand-specific metallo-endoribonuclease involved in late-stage 70S ribosome quality control and in maturation of the 3' terminus of the 16S rRNA. The protein is Endoribonuclease YbeY of Clostridium botulinum (strain Kyoto / Type A2).